Reading from the N-terminus, the 262-residue chain is GTP cyclohydrolase 1 type 2 homolog (262 aa).

5 residues coordinate a divalent metal cation: histidine 68, histidine 69, aspartate 108, histidine 226, and glutamate 229.

This sequence belongs to the GTP cyclohydrolase I type 2/NIF3 family. Homohexamer.

In Ureaplasma parvum serovar 3 (strain ATCC 700970), this protein is GTP cyclohydrolase 1 type 2 homolog.